Consider the following 221-residue polypeptide: PKHD-type hydroxylase P9211_12561 (221 aa).

The Fe2OG dioxygenase domain maps to 80–174; the sequence is KVHGTMFTRS…RIVCVGWIQS (95 aa). Fe cation contacts are provided by His98, Asp100, and His155. Residue Arg165 participates in 2-oxoglutarate binding.

Fe(2+) serves as cofactor. L-ascorbate is required as a cofactor.

In Prochlorococcus marinus (strain MIT 9211), this protein is PKHD-type hydroxylase P9211_12561.